The primary structure comprises 297 residues: Salivary glue protein Sgs-4 (297 aa).

The N-terminal stretch at 1–21 (MRLELLVVLLVGLAALAPSGS) is a signal peptide. Tandem repeats lie at residues 26 to 32 (TEPPRCE), 33 to 39 (TEPPRCE), 40 to 46 (TEPPRCE), 47 to 53 (TEPPRCE), 54 to 60 (TEPPRCE), 61 to 67 (TTTPKCE), 68 to 74 (TTPPTCR), 75 to 81 (TEPPTCK), 82 to 88 (TEPPTCR), 89 to 95 (TEPPTCK), 96 to 102 (TKPPTCR), 103 to 109 (TEPPTCR), 110 to 116 (TEPPTCK), 117 to 123 (TKPPTCK), 124 to 130 (TEPPTCK), 131 to 137 (TEPPTCR), 138 to 144 (TEPPTCK), 145 to 151 (TEPPTCR), 152 to 158 (TEPPTCK), 159 to 165 (TEPPTCK), and 166 to 172 (TEPPTCK). A disordered region spans residues 26–84 (TEPPRCETEPPRCETEPPRCETEPPRCETEPPRCETTTPKCETTPPTCRTEPPTCKTEP). Positions 26 to 179 (TEPPRCETEP…TCKTEPPCEK (154 aa)) are 22 X 7 AA approximate tandem repeats of T-[ETK]-[PT]-P-[RKT]-C-[ERK]. Residues 27–58 (EPPRCETEPPRCETEPPRCETEPPRCETEPPR) are compositionally biased toward basic and acidic residues. Residues 59-84 (CETTTPKCETTPPTCRTEPPTCKTEP) are compositionally biased toward low complexity. Low complexity predominate over residues 141 to 174 (PTCKTEPPTCRTEPPTCKTEPPTCKTEPPTCKTE). Disordered regions lie at residues 141-218 (PTCK…SGCG) and 243-297 (PDSK…KGGC). The 22; approximate repeat unit spans residues 173 to 179 (TEPPCEK). Basic residues-rich tracts occupy residues 181-208 (CTKR…HHNR) and 282-291 (NTTKKPRKTQ).

In terms of tissue distribution, salivary gland.

The protein resides in the secreted. This chain is Salivary glue protein Sgs-4 (Sgs4), found in Drosophila melanogaster (Fruit fly).